The primary structure comprises 126 residues: Fluoride-specific ion channel FluC (126 aa).

4 consecutive transmembrane segments (helical) span residues 4 to 24 (PLLS…FLGL), 33 to 53 (IPLG…FAMA), 67 to 87 (FVIT…IEIV), and 97 to 117 (MAML…CLGL). Residues glycine 74 and threonine 77 each contribute to the Na(+) site.

The protein belongs to the fluoride channel Fluc/FEX (TC 1.A.43) family.

The protein resides in the cell inner membrane. It carries out the reaction fluoride(in) = fluoride(out). Na(+) is not transported, but it plays an essential structural role and its presence is essential for fluoride channel function. Functionally, fluoride-specific ion channel. Important for reducing fluoride concentration in the cell, thus reducing its toxicity. The polypeptide is Fluoride-specific ion channel FluC (Acinetobacter baumannii (strain ATCC 17978 / DSM 105126 / CIP 53.77 / LMG 1025 / NCDC KC755 / 5377)).